Here is a 151-residue protein sequence, read N- to C-terminus: uncharacterized protein (151 aa).

4 consecutive transmembrane segments (helical) span residues 22–42, 62–82, 97–117, and 121–141; these read IVSI…GFFF, ALFI…TKII, LFAF…ADYF, and IYIP…IELA.

The protein resides in the cell membrane. This is an uncharacterized protein from Bacillus subtilis (strain 168).